Reading from the N-terminus, the 65-residue chain is 7 kDa A-type inclusion protein (65 aa).

Polar residues predominate over residues 1 to 20; it reads MSNQNIPQLSEYQTSVSQVA. The disordered stretch occupies residues 1–32; that stretch reads MSNQNIPQLSEYQTSVSQVAVTPPPKPKTPQI.

In Bos taurus (Bovine), this protein is 7 kDa A-type inclusion protein.